The chain runs to 726 residues: Catalase-peroxidase (726 aa).

Positions 1–25 (MDAKTDDSAGKCPFTGGGRRGHRNR) are disordered. Residues 96–218 (WHSAGTYRIT…LAAVQMGLIY (123 aa)) constitute a cross-link (tryptophyl-tyrosyl-methioninium (Trp-Tyr) (with M-244)). Residue histidine 97 is the Proton acceptor of the active site. The tryptophyl-tyrosyl-methioninium (Tyr-Met) (with W-96) cross-link spans 218 to 244 (YVNPEGPNGNPDPVAAAKDIRETFYRM). Residue histidine 259 participates in heme b binding.

This sequence belongs to the peroxidase family. Peroxidase/catalase subfamily. Homodimer or homotetramer. The cofactor is heme b. Post-translationally, formation of the three residue Trp-Tyr-Met cross-link is important for the catalase, but not the peroxidase activity of the enzyme.

It catalyses the reaction H2O2 + AH2 = A + 2 H2O. The catalysed reaction is 2 H2O2 = O2 + 2 H2O. Its function is as follows. Bifunctional enzyme with both catalase and broad-spectrum peroxidase activity. The protein is Catalase-peroxidase of Chelativorans sp. (strain BNC1).